A 149-amino-acid polypeptide reads, in one-letter code: Extracellular protease inhibitor 1 (149 aa).

The N-terminal stretch at 1–16 (MKSALLFTLVVAAVHA) is a signal peptide. Kazal-like domains lie at 29 to 86 (ESNE…SSTG) and 88 to 141 (QPPS…ACVG). Intrachain disulfides connect Cys-35–Cys-65 and Cys-39–Cys-58. Residue Asn-67 is glycosylated (N-linked (GlcNAc...) asparagine). Cystine bridges form between Cys-94/Cys-124, Cys-98/Cys-117, and Cys-106/Cys-139.

In terms of assembly, interacts with host subtilisin-like protease P69B.

The protein resides in the secreted. Functionally, secreted effector that interacts with and inhibits the pathogenesis-related P69B subtilisin-like serine protease of host tomato. Inhibition of host proteases by a pathogen extracellular protease inhibitor forms a specific type of defense-counterdefense mechanism between plants and microbial pathogens. The sequence is that of Extracellular protease inhibitor 1 from Phytophthora infestans (Potato late blight agent).